A 403-amino-acid chain; its full sequence is Probable tRNA sulfurtransferase (403 aa).

Residues 61 to 166 form the THUMP domain; sequence EAIAESLKDV…SGYSYIMCDE (106 aa). ATP contacts are provided by residues 184 to 185, 209 to 210, R266, G288, and Q297; these read LL and HF.

It belongs to the ThiI family.

It localises to the cytoplasm. The catalysed reaction is [ThiI sulfur-carrier protein]-S-sulfanyl-L-cysteine + a uridine in tRNA + 2 reduced [2Fe-2S]-[ferredoxin] + ATP + H(+) = [ThiI sulfur-carrier protein]-L-cysteine + a 4-thiouridine in tRNA + 2 oxidized [2Fe-2S]-[ferredoxin] + AMP + diphosphate. The enzyme catalyses [ThiS sulfur-carrier protein]-C-terminal Gly-Gly-AMP + S-sulfanyl-L-cysteinyl-[cysteine desulfurase] + AH2 = [ThiS sulfur-carrier protein]-C-terminal-Gly-aminoethanethioate + L-cysteinyl-[cysteine desulfurase] + A + AMP + 2 H(+). It participates in cofactor biosynthesis; thiamine diphosphate biosynthesis. Catalyzes the ATP-dependent transfer of a sulfur to tRNA to produce 4-thiouridine in position 8 of tRNAs, which functions as a near-UV photosensor. Also catalyzes the transfer of sulfur to the sulfur carrier protein ThiS, forming ThiS-thiocarboxylate. This is a step in the synthesis of thiazole, in the thiamine biosynthesis pathway. The sulfur is donated as persulfide by IscS. This Bacillus cytotoxicus (strain DSM 22905 / CIP 110041 / 391-98 / NVH 391-98) protein is Probable tRNA sulfurtransferase.